The following is a 462-amino-acid chain: BPI fold-containing family B member 2 (462 aa).

Positions 1 to 22 are cleaved as a signal peptide; the sequence is MARACSLGLLLLLLLLLRTVVT. Thr55 is modified (phosphothreonine). The residue at position 63 (Ser63) is a Phosphoserine. Asn99 carries an N-linked (GlcNAc...) asparagine glycan. A disulfide bridge links Cys140 with Cys177. Asn297 and Asn336 each carry an N-linked (GlcNAc...) asparagine glycan.

The protein belongs to the BPI/LBP/Plunc superfamily. BPI/LBP family.

Its subcellular location is the secreted. The polypeptide is BPI fold-containing family B member 2 (Bpifb2) (Mus musculus (Mouse)).